We begin with the raw amino-acid sequence, 253 residues long: MLKTRIIPCLDVADGRVVKGVNFVDLRDAGDPVEAARAYDAAGADELCFLDIHATHENRGTMYDLVTRTAEQCFMPLTVGGGVRTHQDVRALLLAGADKVSFNSAAVADPTVVAEAADRFGSQCIVVAIDAKTVAPGRWEIFTHGGRRATGIDAVAFACDVASRGAGEILLTSMDRDGTRAGFNLPLTRAISDAVPIPVIASGGVGTLDHLVEGVTEGGASAVLAASIFHFGEFTIGEAKAHMASAGIPVRLA.

Active-site residues include D11 and D130.

Belongs to the HisA/HisF family. As to quaternary structure, heterodimer of HisH and HisF.

It is found in the cytoplasm. It catalyses the reaction 5-[(5-phospho-1-deoxy-D-ribulos-1-ylimino)methylamino]-1-(5-phospho-beta-D-ribosyl)imidazole-4-carboxamide + L-glutamine = D-erythro-1-(imidazol-4-yl)glycerol 3-phosphate + 5-amino-1-(5-phospho-beta-D-ribosyl)imidazole-4-carboxamide + L-glutamate + H(+). It functions in the pathway amino-acid biosynthesis; L-histidine biosynthesis; L-histidine from 5-phospho-alpha-D-ribose 1-diphosphate: step 5/9. IGPS catalyzes the conversion of PRFAR and glutamine to IGP, AICAR and glutamate. The HisF subunit catalyzes the cyclization activity that produces IGP and AICAR from PRFAR using the ammonia provided by the HisH subunit. This chain is Imidazole glycerol phosphate synthase subunit HisF, found in Cereibacter sphaeroides (strain ATCC 17029 / ATH 2.4.9) (Rhodobacter sphaeroides).